We begin with the raw amino-acid sequence, 431 residues long: Histidinol dehydrogenase (431 aa).

Y124, Q187, and N210 together coordinate NAD(+). Substrate-binding residues include S236, Q258, and H261. Zn(2+) is bound by residues Q258 and H261. Active-site proton acceptor residues include E325 and H326. Residues H326, D359, E413, and H418 each contribute to the substrate site. Residue D359 coordinates Zn(2+). H418 contributes to the Zn(2+) binding site.

Belongs to the histidinol dehydrogenase family. Zn(2+) serves as cofactor.

It carries out the reaction L-histidinol + 2 NAD(+) + H2O = L-histidine + 2 NADH + 3 H(+). It participates in amino-acid biosynthesis; L-histidine biosynthesis; L-histidine from 5-phospho-alpha-D-ribose 1-diphosphate: step 9/9. Catalyzes the sequential NAD-dependent oxidations of L-histidinol to L-histidinaldehyde and then to L-histidine. The protein is Histidinol dehydrogenase of Legionella pneumophila (strain Paris).